Reading from the N-terminus, the 2499-residue chain is Probable polyketide synthase 22 (2499 aa).

Residues 11–430 form the Ketosynthase family 3 (KS3) domain; sequence DNQVAIVGLG…GSNACVLLSE (420 aa). Catalysis depends on for beta-ketoacyl synthase activity residues Cys177, His316, and His354. The segment at 623–656 is acyl/malonyl transferases; sequence GITPSIIVGHSLGEVASAFCSGMIDLETACFVIY. Ser633 serves as the catalytic For acyl/malonyl transferase activity. Positions 922–1044 are N-terminal hotdog fold; sequence APINQLGNKN…SRILMKSLDV (123 aa). Residues 922–1209 enclose the PKS/mFAS DH domain; the sequence is APINQLGNKN…IASTLSTKSE (288 aa). His956 acts as the Proton acceptor; for dehydratase activity in catalysis. Residues 1059–1209 form a C-terminal hotdog fold region; that stretch reads NWSTLKREQL…IASTLSTKSE (151 aa). Residue Asp1121 is the Proton donor; for dehydratase activity of the active site. The Carrier domain occupies 2414–2491; sequence EKEFSIRQDI…QIINIVTTKV (78 aa). Ser2451 is modified (O-(pantetheine 4'-phosphoryl)serine).

The cofactor is pantetheine 4'-phosphate.

Probable polyketide synthase. This Dictyostelium discoideum (Social amoeba) protein is Probable polyketide synthase 22 (pks22).